A 168-amino-acid polypeptide reads, in one-letter code: Endoribonuclease YbeY (168 aa).

The Zn(2+) site is built by histidine 126, histidine 130, and histidine 136.

It belongs to the endoribonuclease YbeY family. It depends on Zn(2+) as a cofactor.

The protein resides in the cytoplasm. In terms of biological role, single strand-specific metallo-endoribonuclease involved in late-stage 70S ribosome quality control and in maturation of the 3' terminus of the 16S rRNA. The chain is Endoribonuclease YbeY from Agrobacterium fabrum (strain C58 / ATCC 33970) (Agrobacterium tumefaciens (strain C58)).